The following is a 373-amino-acid chain: Geraniol dehydrogenase (373 aa).

Zn(2+)-binding residues include cysteine 47, histidine 67, cysteine 96, cysteine 99, cysteine 102, cysteine 110, and cysteine 175.

This sequence belongs to the zinc-containing alcohol dehydrogenase family. As to quaternary structure, homodimer. Zn(2+) serves as cofactor.

The catalysed reaction is (2E)-geraniol + NAD(+) = (2E)-geranial + NADH + H(+). It carries out the reaction perillyl alcohol + NAD(+) = perillyl aldehyde + NADH + H(+). It functions in the pathway terpene metabolism; monoterpene degradation. Is inhibited by EDTA, N-ethylmaleimide, diethylpyrocarbonate, and 1-cyclohexyl-N-(2-morpholinoethyl)carbodiimide in vitro. Involved in the degradation of the monoterpenes beta-myrcene and limonene. During anaerobic degradation of beta-myrcene, catalyzes the NAD(+)-dependent oxidation of geraniol to geranial. Can also catalyze the oxidation of (S)-perillyl alcohol to perillyl aldehyde, and to a lesser extent, the oxidation of nerol, citronellol, cumic alcohol, and benzyl alcohol. Cannot use NADP(+) instead of NAD(+) as cosubstrate. This chain is Geraniol dehydrogenase, found in Castellaniella defragrans (strain DSM 12143 / CCUG 39792 / 65Phen) (Alcaligenes defragrans).